Consider the following 132-residue polypeptide: Flagellar assembly factor FliW (132 aa).

It belongs to the FliW family. As to quaternary structure, interacts with translational regulator CsrA and flagellin(s).

The protein resides in the cytoplasm. Functionally, acts as an anti-CsrA protein, binds CsrA and prevents it from repressing translation of its target genes, one of which is flagellin. Binds to flagellin and participates in the assembly of the flagellum. The protein is Flagellar assembly factor FliW of Borreliella afzelii (strain PKo) (Borrelia afzelii).